The sequence spans 247 residues: MSKEPDRLFAQPLPQVPDFAFNEDVVRVFPDMIKRSVPGYPAIVENLGVLAAQFAQPDTVLYDLGCSLGAVTQALRRHVRSDGCEVIAIDNSTAMVERCREYLNAQNSMFQELLPVQVIEGDILALAFKPASVVALNFTLQFVAPEQRLALLGRIRGALVPGGALILSEKLRFNDEQEHALLTDLHIAFKRANGYSDLEIAQKRSAIENVMKPDSLEEHRQRLLAAGFSKVVPWFQCLNFASLIALP.

S-adenosyl-L-methionine contacts are provided by residues Y40, 65–67, 90–91, 122–123, N137, and R204; these read GCS, DN, and DI.

This sequence belongs to the class I-like SAM-binding methyltransferase superfamily. Cx-SAM synthase family. As to quaternary structure, homodimer.

It catalyses the reaction prephenate + S-adenosyl-L-methionine = carboxy-S-adenosyl-L-methionine + 3-phenylpyruvate + H2O. Catalyzes the conversion of S-adenosyl-L-methionine (SAM) to carboxy-S-adenosyl-L-methionine (Cx-SAM). In Pseudomonas syringae pv. tomato (strain ATCC BAA-871 / DC3000), this protein is Carboxy-S-adenosyl-L-methionine synthase.